We begin with the raw amino-acid sequence, 76 residues long: UPF0291 protein GK1331 (76 aa).

Positions 57–76 (PSGNDVTPKKLKESQRRRFH) are disordered. Residues 63 to 76 (TPKKLKESQRRRFH) are compositionally biased toward basic and acidic residues.

This sequence belongs to the UPF0291 family.

The protein resides in the cytoplasm. In Geobacillus kaustophilus (strain HTA426), this protein is UPF0291 protein GK1331.